We begin with the raw amino-acid sequence, 492 residues long: Pentatricopeptide repeat-containing protein At4g21705, mitochondrial (492 aa).

A mitochondrion-targeting transit peptide spans 1 to 17 (MNILRRIPANLIASRYY). PPR repeat units lie at residues 125-159 (NDKT…GFVT), 160-194 (SSLT…NVAP), 195-225 (DNYS…MERR), 231-261 (DWNT…SENR), 266-296 (DGEG…EKDV), 301-335 (INQD…GNCY), 336-370 (DFRV…GKAT), and 371-405 (TPES…EVGS).

The protein belongs to the PPR family. P subfamily.

It localises to the mitochondrion. This is Pentatricopeptide repeat-containing protein At4g21705, mitochondrial from Arabidopsis thaliana (Mouse-ear cress).